The chain runs to 508 residues: Photosystem II CP47 reaction center protein (508 aa).

A run of 6 helical transmembrane segments spans residues 21–36, 101–115, 140–156, 203–218, 237–252, and 457–472; these read SVHI…WAGS, IMFS…IWHW, GIHL…FGAF, IAAG…FHLS, VLSS…AFVV, and SFAL…HGAR.

It belongs to the PsbB/PsbC family. PsbB subfamily. As to quaternary structure, PSII is composed of 1 copy each of membrane proteins PsbA, PsbB, PsbC, PsbD, PsbE, PsbF, PsbH, PsbI, PsbJ, PsbK, PsbL, PsbM, PsbT, PsbX, PsbY, PsbZ, Psb30/Ycf12, at least 3 peripheral proteins of the oxygen-evolving complex and a large number of cofactors. It forms dimeric complexes. Binds multiple chlorophylls. PSII binds additional chlorophylls, carotenoids and specific lipids. is required as a cofactor.

The protein resides in the plastid. The protein localises to the chloroplast thylakoid membrane. Its function is as follows. One of the components of the core complex of photosystem II (PSII). It binds chlorophyll and helps catalyze the primary light-induced photochemical processes of PSII. PSII is a light-driven water:plastoquinone oxidoreductase, using light energy to abstract electrons from H(2)O, generating O(2) and a proton gradient subsequently used for ATP formation. The protein is Photosystem II CP47 reaction center protein of Guizotia abyssinica (Niger).